The sequence spans 403 residues: Glutamyl-tRNA reductase 2 (403 aa).

Substrate contacts are provided by residues 47 to 50, S98, 103 to 105, and Q109; these read TCHR and ETD. Residue C48 is the Nucleophile of the active site. 177–182 contacts NADP(+); that stretch reads GAGAVG.

This sequence belongs to the glutamyl-tRNA reductase family. In terms of assembly, homodimer.

The enzyme catalyses (S)-4-amino-5-oxopentanoate + tRNA(Glu) + NADP(+) = L-glutamyl-tRNA(Glu) + NADPH + H(+). It functions in the pathway porphyrin-containing compound metabolism; protoporphyrin-IX biosynthesis; 5-aminolevulinate from L-glutamyl-tRNA(Glu): step 1/2. Catalyzes the NADPH-dependent reduction of glutamyl-tRNA(Glu) to glutamate 1-semialdehyde (GSA). The sequence is that of Glutamyl-tRNA reductase 2 from Pyrobaculum arsenaticum (strain DSM 13514 / JCM 11321 / PZ6).